A 345-amino-acid chain; its full sequence is L-threonine 3-dehydrogenase (345 aa).

Residue Cys-38 participates in Zn(2+) binding. Catalysis depends on charge relay system residues Thr-40 and His-43. Residues His-63, Glu-64, Cys-93, Cys-96, Cys-99, and Cys-107 each coordinate Zn(2+). Residues Ile-176, Asp-196, Arg-201, 263 to 265 (LGT), and 287 to 288 (VT) each bind NAD(+).

The protein belongs to the zinc-containing alcohol dehydrogenase family. Homotetramer. Requires Zn(2+) as cofactor.

The protein localises to the cytoplasm. It catalyses the reaction L-threonine + NAD(+) = (2S)-2-amino-3-oxobutanoate + NADH + H(+). It participates in amino-acid degradation; L-threonine degradation via oxydo-reductase pathway; glycine from L-threonine: step 1/2. Catalyzes the NAD(+)-dependent oxidation of L-threonine to 2-amino-3-ketobutyrate. The protein is L-threonine 3-dehydrogenase of Cutibacterium acnes (strain DSM 16379 / KPA171202) (Propionibacterium acnes).